Here is a 120-residue protein sequence, read N- to C-terminus: uncharacterized protein (120 aa).

The chain crosses the membrane as a helical span at residues 40 to 62; it reads SFLTDALLNLIYILFFSSSVFNW.

The protein resides in the membrane. This is an uncharacterized protein from Saccharomyces cerevisiae (strain ATCC 204508 / S288c) (Baker's yeast).